Reading from the N-terminus, the 2602-residue chain is Filamin-B (2602 aa).

The actin-binding stretch occupies residues 1–239 (MPVTEKDLAE…VMTYLSQFPK (239 aa)). Calponin-homology (CH) domains lie at 16-122 (KIQQ…LHYS) and 139-242 (QTPK…KAKL). At threonine 216 the chain carries Phosphothreonine. Residues 244–267 (PGAPLKPKLNPKKARAYGRGIEPT) form a disordered region. Filamin repeat units lie at residues 249 to 347 (KPKL…EVSV), 349 to 446 (KAQG…VVQV), 447 to 543 (GEAC…EVQV), 544 to 636 (GPEA…MAFI), 640 to 736 (TGGY…RVNI), 737 to 839 (GQGS…RVKV), 840 to 938 (DPSH…TVGV), 939 to 1034 (AAPL…TVEA), 1035 to 1127 (SLPP…KADI), 1128 to 1222 (EMPF…RVKV), 1223 to 1322 (EPAV…KVAV), 1323 to 1415 (TEGC…RVPV), 1416 to 1511 (KDVV…KVKV), 1512 to 1608 (LPTY…RIRA), and 1609 to 1704 (TQTG…TVMA). Threonine 519 bears the Phosphothreonine mark. Lysine 681 is modified (N6-acetyllysine). Serine 730 bears the Phosphoserine mark. Phosphoserine occurs at positions 886, 932, 983, and 1028. An interaction with FBLP1 region spans residues 1128–1511 (EMPFDPSKVV…IPRSPFKVKV (384 aa)). Threonine 1307 carries the post-translational modification Phosphothreonine. Serine 1316 is subject to Phosphoserine. Phosphoserine is present on residues serine 1433, asparagine 1474, serine 1505, and serine 1602. Residues 1705–1728 (TDGEVTAVEEAPVNACPPGFRPWV) are hinge 1. 8 Filamin repeats span residues 1729-1813 (TEEA…SPLQ), 1816-1908 (VNYP…TAKI), 1919-1994 (KLGS…SIMV), 1997-2089 (SEIG…TVKI), 2091-2185 (GEGR…QFTV), 2188-2280 (LGEG…LVPV), 2282-2375 (APSD…KVRV), and 2379-2471 (GQAG…KAKV). At lysine 1780 the chain carries N6-acetyllysine. An interaction with the cytoplasmic tail of GP1BA region spans residues 1862 to 2148 (SKAEISCIDN…RVTEAEIVPM (287 aa)). The interaction with FLNA 1 stretch occupies residues 2060–2225 (SYFPTVPGVY…IWTREAGAGG (166 aa)). Phosphoserine is present on residues serine 2083, serine 2107, and serine 2113. The tract at residues 2130-2602 (SAHVTSPSGR…PGSPFHVTVP (473 aa)) is interaction with INPPL1. Phosphoserine is present on residues serine 2369 and serine 2465. Residue lysine 2468 forms a Glycyl lysine isopeptide (Lys-Gly) (interchain with G-Cter in ISG15) linkage. Positions 2472-2506 (TGQRLVSPGSANETSSILVESVTRSSTETCYSAIP) are hinge 2. The segment at 2472–2602 (TGQRLVSPGS…PGSPFHVTVP (131 aa)) is self-association site, tail. Phosphoserine occurs at positions 2478, 2481, and 2492. A Filamin 24 repeat occupies 2507 to 2601 (KASSDASKVT…IPGSPFHVTV (95 aa)). The interaction with FLNA 2 stretch occupies residues 2507–2602 (KASSDASKVT…PGSPFHVTVP (96 aa)). An N6-succinyllysine mark is found at lysine 2518 and lysine 2524. Lysine 2576 carries the post-translational modification N6-acetyllysine.

The protein belongs to the filamin family. As to quaternary structure, homodimer. Interacts with MICALL2. Interacts with RFLNA and RFLNB. Isoform 1 interacts with FBLP1, FLNA, FLNC, GP1BA, INPPL1, ITGB1A, PSEN1 and PSEN2. Isoform 3 interacts with ITGB1A, ITGB1D, ITGB3 and ITGB6. Interacts with MYOT and MYOZ1. Interacts with HBV capsid protein. Interacts with ASB2 isoform 1; the interaction targets FLNB for proteasomal degradation. Post-translationally, ISGylation prevents ability to interact with the upstream activators of the JNK cascade and inhibits IFNA-induced JNK signaling. In terms of processing, ubiquitination by a SCF-like complex containing ASB2 isoform 1 leads to proteasomal degradation which promotes muscle differentiation. In terms of tissue distribution, ubiquitous. Isoform 1 and isoform 2 are expressed in placenta, bone marrow, brain, umbilical vein endothelial cells (HUVEC), retina and skeletal muscle. Isoform 1 is predominantly expressed in prostate, uterus, liver, thyroid, stomach, lymph node, small intestine, spleen, skeletal muscle, kidney, placenta, pancreas, heart, lung, platelets, endothelial cells, megakaryocytic and erythroleukemic cell lines. Isoform 2 is predominantly expressed in spinal cord, platelet and Daudi cells. Also expressed in thyroid adenoma, neurofibrillary tangles (NFT), senile plaques in the hippocampus and cerebral cortex in Alzheimer disease (AD). Isoform 3 and isoform 6 are expressed predominantly in lung, heart, skeletal muscle, testis, spleen, thymus and leukocytes. Isoform 4 and isoform 5 are expressed in heart.

Its subcellular location is the cytoplasm. It localises to the cell cortex. The protein localises to the cytoskeleton. The protein resides in the stress fiber. It is found in the myofibril. Its subcellular location is the sarcomere. It localises to the z line. Functionally, connects cell membrane constituents to the actin cytoskeleton. May promote orthogonal branching of actin filaments and links actin filaments to membrane glycoproteins. Anchors various transmembrane proteins to the actin cytoskeleton. Interaction with FLNA may allow neuroblast migration from the ventricular zone into the cortical plate. Various interactions and localizations of isoforms affect myotube morphology and myogenesis. Isoform 6 accelerates muscle differentiation in vitro. The protein is Filamin-B (FLNB) of Homo sapiens (Human).